A 351-amino-acid polypeptide reads, in one-letter code: Peptide chain release factor 1 (351 aa).

At Q229 the chain carries N5-methylglutamine.

It belongs to the prokaryotic/mitochondrial release factor family. Post-translationally, methylated by PrmC. Methylation increases the termination efficiency of RF1.

It is found in the cytoplasm. In terms of biological role, peptide chain release factor 1 directs the termination of translation in response to the peptide chain termination codons UAG and UAA. The sequence is that of Peptide chain release factor 1 from Ruegeria pomeroyi (strain ATCC 700808 / DSM 15171 / DSS-3) (Silicibacter pomeroyi).